The chain runs to 332 residues: RNA polymerase principal sigma factor HrdD (332 aa).

Residues 1 to 21 (MATRAVARRQPAASGETGAAG) are disordered. The Polymerase core binding signature appears at 124-137 (DLIQEGNAGLVRAV). Positions 294-313 (LTEVGKQHGLTRERIRQIEK) form a DNA-binding region, H-T-H motif.

Belongs to the sigma-70 factor family.

Sigma factors are initiation factors that promote the attachment of RNA polymerase to specific initiation sites and are then released. This Streptomyces griseus protein is RNA polymerase principal sigma factor HrdD (hrdD).